The chain runs to 134 residues: Neuropeptide-like peptide 11 (134 aa).

Residues 1-20 form the signal peptide; it reads MMSTLALVSLAIFGIAVVCA. Residues 21 to 106 constitute a propeptide that is removed on maturation; it reads APKPATVPVA…YNRLIDAGKK (86 aa). The residue at position 131 (alanine 131) is an Alanine amide.

The protein is Neuropeptide-like peptide 11 (nlp-11) of Caenorhabditis elegans.